The sequence spans 275 residues: Autophagy protein 5 (275 aa).

Residue Met-1 is modified to N-acetylmethionine. A Glycyl lysine isopeptide (Lys-Gly) (interchain with G-Cter in ATG12) cross-link involves residue Lys-130.

Belongs to the ATG5 family. In terms of assembly, forms a conjugate with ATG12. Part of the minor complex composed of 4 sets of ATG12-ATG5 and ATG16L1 (400 kDa); this complex interacts with ATG3 leading to disruption of ATG7 interaction and promotion of ATG8-like proteins lipidation. Forms an 800-kDa complex composed of ATG12-ATG5 and ATG16L2. The ATG12-ATG5 conjugate interacts with RAB33A; this interaction is bridged by ATG16L1 and promotes ATG12-ATG5-ATG16L1 complex recruitment to phagophores. Interacts with TECPR1; the interaction is direct and does not take place when ATG16L1 is associated with the ATG5-ATG12 conjugate. Interacts with DHX58/RIG-1, IFIH1/MDA5 and MAVS/IPS-1 in monomeric form as well as in ATG12-ATG5 conjugate form. The interaction with MAVS is further enhanced upon vesicular stomatitis virus (VSV) infection. Interacts with ATG3. Interacts with ATG7 and ATG10. Interacts with FADD. Interacts with Bassoon/BSN; this interaction is important for the regulation of presynaptic autophagy. Interacts with ATG16L2. Post-translationally, conjugated to ATG12; which is essential for autophagy, but is not required for association with isolation membrane. In terms of processing, acetylated by EP300.

It is found in the cytoplasm. The protein localises to the preautophagosomal structure membrane. Functionally, involved in autophagic vesicle formation. Conjugation with ATG12, through a ubiquitin-like conjugating system involving ATG7 as an E1-like activating enzyme and ATG10 as an E2-like conjugating enzyme, is essential for its function. The ATG12-ATG5 conjugate acts as an E3-like enzyme which is required for lipidation of ATG8 family proteins and their association to the vesicle membranes. Involved in mitochondrial quality control after oxidative damage, and in subsequent cellular longevity. Plays a critical role in multiple aspects of lymphocyte development and is essential for both B and T lymphocyte survival and proliferation. Required for optimal processing and presentation of antigens for MHC II. Involved in the maintenance of axon morphology and membrane structures, as well as in normal adipocyte differentiation. Promotes primary ciliogenesis through removal of OFD1 from centriolar satellites and degradation of IFT20 via the autophagic pathway. As part of the ATG8 conjugation system with ATG12 and ATG16L1, required for recruitment of LRRK2 to stressed lysosomes and induction of LRRK2 kinase activity in response to lysosomal stress. May play an important role in the apoptotic process, possibly within the modified cytoskeleton. Its expression is a relatively late event in the apoptotic process, occurring downstream of caspase activity. Plays a crucial role in IFN-gamma-induced autophagic cell death by interacting with FADD. The protein is Autophagy protein 5 of Sus scrofa (Pig).